The sequence spans 275 residues: Adenosylcobinamide-GDP ribazoletransferase (275 aa).

A run of 6 helical transmembrane segments spans residues 53-73 (WFVF…TISL), 113-133 (VGSF…LGVS), 144-164 (LPFT…LYFV), 204-224 (FACI…PYFL), 225-245 (LSLL…KRWI), and 253-273 (LGAV…FVWI).

The protein belongs to the CobS family. The cofactor is Mg(2+).

The protein localises to the cell inner membrane. The enzyme catalyses alpha-ribazole + adenosylcob(III)inamide-GDP = adenosylcob(III)alamin + GMP + H(+). It carries out the reaction alpha-ribazole 5'-phosphate + adenosylcob(III)inamide-GDP = adenosylcob(III)alamin 5'-phosphate + GMP + H(+). It functions in the pathway cofactor biosynthesis; adenosylcobalamin biosynthesis; adenosylcobalamin from cob(II)yrinate a,c-diamide: step 7/7. In terms of biological role, joins adenosylcobinamide-GDP and alpha-ribazole to generate adenosylcobalamin (Ado-cobalamin). Also synthesizes adenosylcobalamin 5'-phosphate from adenosylcobinamide-GDP and alpha-ribazole 5'-phosphate. The polypeptide is Adenosylcobinamide-GDP ribazoletransferase (Leptospira biflexa serovar Patoc (strain Patoc 1 / Ames)).